We begin with the raw amino-acid sequence, 256 residues long: Triosephosphate isomerase (256 aa).

Substrate is bound at residue 9 to 11; that stretch reads NWK. H97 (electrophile) is an active-site residue. The active-site Proton acceptor is E169. Substrate-binding positions include G175, S214, and 235–236; that span reads GG.

Belongs to the triosephosphate isomerase family. As to quaternary structure, homodimer.

It is found in the cytoplasm. The catalysed reaction is D-glyceraldehyde 3-phosphate = dihydroxyacetone phosphate. Its pathway is carbohydrate biosynthesis; gluconeogenesis. It functions in the pathway carbohydrate degradation; glycolysis; D-glyceraldehyde 3-phosphate from glycerone phosphate: step 1/1. Functionally, involved in the gluconeogenesis. Catalyzes stereospecifically the conversion of dihydroxyacetone phosphate (DHAP) to D-glyceraldehyde-3-phosphate (G3P). The chain is Triosephosphate isomerase from Moritella marina (Vibrio marinus).